Here is a 376-residue protein sequence, read N- to C-terminus: Putative glutamate--cysteine ligase 2-3 (376 aa).

This sequence belongs to the glutamate--cysteine ligase type 2 family. YbdK subfamily.

The enzyme catalyses L-cysteine + L-glutamate + ATP = gamma-L-glutamyl-L-cysteine + ADP + phosphate + H(+). Its function is as follows. ATP-dependent carboxylate-amine ligase which exhibits weak glutamate--cysteine ligase activity. This is Putative glutamate--cysteine ligase 2-3 from Nocardioides sp. (strain ATCC BAA-499 / JS614).